A 169-amino-acid polypeptide reads, in one-letter code: Small ribosomal subunit protein uS13m (169 aa).

Residues 149-169 (KKLQEKKNKEQKKSQKCKTKK) form a disordered region. The span at 150 to 161 (KLQEKKNKEQKK) shows a compositional bias: basic and acidic residues.

The protein belongs to the universal ribosomal protein uS13 family. In terms of assembly, part of the small ribosomal subunit.

Its subcellular location is the mitochondrion. In terms of biological role, located at the top of the head of the small subunit, it contacts several helices of the small subunit rRNA. This chain is Small ribosomal subunit protein uS13m (mrps13), found in Dictyostelium discoideum (Social amoeba).